A 549-amino-acid chain; its full sequence is Glucose-6-phosphate isomerase (549 aa).

Catalysis depends on Glu355, which acts as the Proton donor. Residues His386 and Lys514 contribute to the active site.

This sequence belongs to the GPI family.

It is found in the cytoplasm. The enzyme catalyses alpha-D-glucose 6-phosphate = beta-D-fructose 6-phosphate. The protein operates within carbohydrate biosynthesis; gluconeogenesis. It participates in carbohydrate degradation; glycolysis; D-glyceraldehyde 3-phosphate and glycerone phosphate from D-glucose: step 2/4. Catalyzes the reversible isomerization of glucose-6-phosphate to fructose-6-phosphate. This Buchnera aphidicola subsp. Acyrthosiphon pisum (strain 5A) protein is Glucose-6-phosphate isomerase.